A 292-amino-acid chain; its full sequence is Protein LRATD1 (292 aa).

Position 38 is a phosphoserine (Ser-38). An LRAT domain is found at 133 to 228 (PAPEPPAPAP…CRFGKREFKA (96 aa)).

It belongs to the LRATD family. In terms of tissue distribution, only detected in testis. Highly expressed in colon cancer cells.

The protein resides in the cytoplasm. Functionally, may play a role in cell morphology and motility. The sequence is that of Protein LRATD1 from Homo sapiens (Human).